We begin with the raw amino-acid sequence, 264 residues long: Phosphonoacetaldehyde hydrolase (264 aa).

Aspartate 9 functions as the Nucleophile in the catalytic mechanism. Mg(2+) is bound by residues aspartate 9 and alanine 11. Residue lysine 50 is the Schiff-base intermediate with substrate of the active site. Aspartate 183 is a binding site for Mg(2+).

It belongs to the HAD-like hydrolase superfamily. PhnX family. As to quaternary structure, homodimer. The cofactor is Mg(2+).

It catalyses the reaction phosphonoacetaldehyde + H2O = acetaldehyde + phosphate + H(+). Functionally, involved in phosphonate degradation. This Bacillus anthracis protein is Phosphonoacetaldehyde hydrolase.